The chain runs to 189 residues: MANYSTSEFKGGLKIMQDGEPCSIVENEMVKPGKGQAFNRVKIRKLISGKVVEKTFKSGESVEGADVIELELSYLYNDGEFWHFMNNETFEQVPADEKAVGEAEKWLVEQDVCTLTLWEGKPINVQPPNFVELEITETDPGLKGDTAGTGGKPATLSTGAVVRVPLFVQIGEVIKVDTRSGEYVSRVQK.

Lys-34 is modified (N6-(3,6-diaminohexanoyl)-5-hydroxylysine).

The protein belongs to the elongation factor P family. Post-translationally, may be beta-lysylated on the epsilon-amino group of Lys-34 by the combined action of EpmA and EpmB, and then hydroxylated on the C5 position of the same residue by EpmC (if this protein is present). Lysylation is critical for the stimulatory effect of EF-P on peptide-bond formation. The lysylation moiety may extend toward the peptidyltransferase center and stabilize the terminal 3-CCA end of the tRNA. Hydroxylation of the C5 position on Lys-34 may allow additional potential stabilizing hydrogen-bond interactions with the P-tRNA.

The protein localises to the cytoplasm. Its pathway is protein biosynthesis; polypeptide chain elongation. Its function is as follows. Involved in peptide bond synthesis. Alleviates ribosome stalling that occurs when 3 or more consecutive Pro residues or the sequence PPG is present in a protein, possibly by augmenting the peptidyl transferase activity of the ribosome. Modification of Lys-34 is required for alleviation. This Idiomarina loihiensis (strain ATCC BAA-735 / DSM 15497 / L2-TR) protein is Elongation factor P.